The sequence spans 282 residues: NAC domain-containing protein 1 (282 aa).

Residues 9 to 161 form the NAC domain; that stretch reads LPPGFRFHPT…DWVLCRIYKK (153 aa). A DNA-binding region spans residues 106–167; sequence VGIKKALVFY…IYKKKNLGRT (62 aa). A coiled-coil region spans residues 161–188; sequence KKNLGRTIEMMKVEEEELEAQNVSTTNN.

As to expression, expressed in roots, stem, flowers, and leaves.

It localises to the nucleus. Transcription factor that binds DNA motifs 5'-CGT[AG](5N)NACG[ACT][AC][AT][ACG][ACT]-3' and 5'-CACG[ACT][AC][AT][AGT][CT]-3' in target genes promoters. Promotes leaf senescence and reduces fruit yield and sugar content, probably by establishing abscisic acid (ABA) homeostasis. The polypeptide is NAC domain-containing protein 1 (Solanum lycopersicum (Tomato)).